A 162-amino-acid chain; its full sequence is uncharacterized protein (162 aa).

The 66-residue stretch at 6 to 71 (LDDLDRAILK…PIKPRKLALV (66 aa)) folds into the HTH asnC-type domain. A DNA-binding region (H-T-H motif) is located at residues 25–44 (IAEISNQLKKPESTVHFRIK).

This is an uncharacterized protein from Pyrococcus abyssi (strain GE5 / Orsay).